The primary structure comprises 198 residues: Segregation and condensation protein B (198 aa).

Residues 168-198 (KLADPATDEPDQNEMDLFFDRFNQSKEQEEE) form a disordered region.

It belongs to the ScpB family. As to quaternary structure, homodimer. Homodimerization may be required to stabilize the binding of ScpA to the Smc head domains. Component of a cohesin-like complex composed of ScpA, ScpB and the Smc homodimer, in which ScpA and ScpB bind to the head domain of Smc. The presence of the three proteins is required for the association of the complex with DNA.

It localises to the cytoplasm. Functionally, participates in chromosomal partition during cell division. May act via the formation of a condensin-like complex containing Smc and ScpA that pull DNA away from mid-cell into both cell halves. This is Segregation and condensation protein B from Listeria monocytogenes serovar 1/2a (strain ATCC BAA-679 / EGD-e).